The primary structure comprises 43 residues: Jararafibrase-3 (43 aa).

In terms of domain architecture, C-type lectin spans 10–43; the sequence is MNGLYYKIFDELKAWKDAEMFCRKYKPGWHLASF.

Belongs to the true venom lectin family. As to quaternary structure, monomer. As to expression, expressed by the venom gland.

It is found in the secreted. With respect to regulation, inhibited by 1,10-phenanthroline and EDTA. May have both metalloproteinase and lectin activities. Induces local hemorrhage in the skin of rats. Degrades type-IV collagen, gelatin, laminin and fibronectin. Has hemagglutinating activity on red blood cells. This is Jararafibrase-3 from Bothrops jararaca (Jararaca).